A 272-amino-acid polypeptide reads, in one-letter code: tRNA pseudouridine synthase B (272 aa).

The Nucleophile role is filled by Asp38.

This sequence belongs to the pseudouridine synthase TruB family. Type 1 subfamily.

It carries out the reaction uridine(55) in tRNA = pseudouridine(55) in tRNA. Responsible for synthesis of pseudouridine from uracil-55 in the psi GC loop of transfer RNAs. The sequence is that of tRNA pseudouridine synthase B from Campylobacter jejuni (strain RM1221).